Consider the following 342-residue polypeptide: Succinylglutamate desuccinylase (342 aa).

3 residues coordinate Zn(2+): H63, E66, and H155. Residue E219 is part of the active site.

It belongs to the AspA/AstE family. Succinylglutamate desuccinylase subfamily. Zn(2+) serves as cofactor.

It catalyses the reaction N-succinyl-L-glutamate + H2O = L-glutamate + succinate. The protein operates within amino-acid degradation; L-arginine degradation via AST pathway; L-glutamate and succinate from L-arginine: step 5/5. Functionally, transforms N(2)-succinylglutamate into succinate and glutamate. This Vibrio vulnificus (strain YJ016) protein is Succinylglutamate desuccinylase.